A 346-amino-acid chain; its full sequence is NADH-ubiquinone oxidoreductase chain 2 (346 aa).

Transmembrane regions (helical) follow at residues Met-1–Ile-21, His-25–Ser-45, Phe-60–Ala-80, Met-96–Pro-116, Leu-124–Met-144, Leu-149–Gly-169, Ile-178–Pro-198, Leu-200–Asn-220, Ala-242–Pro-262, Glu-274–Leu-294, and Ile-325–Ala-345.

It belongs to the complex I subunit 2 family.

It localises to the mitochondrion inner membrane. The catalysed reaction is a ubiquinone + NADH + 5 H(+)(in) = a ubiquinol + NAD(+) + 4 H(+)(out). Its function is as follows. Core subunit of the mitochondrial membrane respiratory chain NADH dehydrogenase (Complex I) that is believed to belong to the minimal assembly required for catalysis. Complex I functions in the transfer of electrons from NADH to the respiratory chain. The immediate electron acceptor for the enzyme is believed to be ubiquinone. The chain is NADH-ubiquinone oxidoreductase chain 2 (MT-ND2) from Struthio camelus (Common ostrich).